The following is a 379-amino-acid chain: RING finger protein 215 (379 aa).

Disordered stretches follow at residues 1 to 21 and 44 to 63; these read MGSADRPALRSPSLPPPPPSP and AADGSEPATGEGRGGARSVR. The Cytoplasmic portion of the chain corresponds to 1–24; it reads MGSADRPALRSPSLPPPPPSPPSP. The chain crosses the membrane as a helical span at residues 25 to 45; sequence LLLLLPLLPLWLGLMGPGAAA. Over 46–252 the chain is Extracellular; that stretch reads DGSEPATGEG…GGAQAQEQKP (207 aa). A glycan (N-linked (GlcNAc...) asparagine) is linked at Asn-188. A helical transmembrane segment spans residues 253–273; it reads LQQLWNAILLVAMLLCTGLVV. Topologically, residues 274–379 are cytoplasmic; it reads QAQRQASRQN…NVLGNHYSDD (106 aa). An RING-type; atypical zinc finger spans residues 327–368; sequence CAVCLDYFCNKQWLRVLPCKHEFHRDCVDPWLMLQQTCPLCK.

It is found in the membrane. This chain is RING finger protein 215 (Rnf215), found in Mus musculus (Mouse).